Consider the following 256-residue polypeptide: Imidazole glycerol phosphate synthase subunit HisF (256 aa).

Catalysis depends on residues D11 and D130.

Belongs to the HisA/HisF family. As to quaternary structure, heterodimer of HisH and HisF.

It is found in the cytoplasm. It catalyses the reaction 5-[(5-phospho-1-deoxy-D-ribulos-1-ylimino)methylamino]-1-(5-phospho-beta-D-ribosyl)imidazole-4-carboxamide + L-glutamine = D-erythro-1-(imidazol-4-yl)glycerol 3-phosphate + 5-amino-1-(5-phospho-beta-D-ribosyl)imidazole-4-carboxamide + L-glutamate + H(+). The protein operates within amino-acid biosynthesis; L-histidine biosynthesis; L-histidine from 5-phospho-alpha-D-ribose 1-diphosphate: step 5/9. IGPS catalyzes the conversion of PRFAR and glutamine to IGP, AICAR and glutamate. The HisF subunit catalyzes the cyclization activity that produces IGP and AICAR from PRFAR using the ammonia provided by the HisH subunit. The protein is Imidazole glycerol phosphate synthase subunit HisF of Prochlorococcus marinus (strain NATL2A).